Reading from the N-terminus, the 932-residue chain is RNA-binding protein 12 (932 aa).

A disordered region spans residues 96-116; that stretch reads DIPPANASRSGPPPSSGMSSR. The segment covering 98 to 116 has biased composition (low complexity); it reads PPANASRSGPPPSSGMSSR. Positions 304-379 constitute an RRM 1 domain; the sequence is LYVSVHGMPF…RYVEVSPATE (76 aa). Phosphoserine occurs at positions 352 and 375. Polar residues-rich tracts occupy residues 392-401 and 408-417; these read KQNMGPSGQT and LPRSKSPSGQ. A disordered region spans residues 392-424; that stretch reads KQNMGPSGQTHPPPQTLPRSKSPSGQKRSRSRS. Phosphoserine is present on residues S420, S422, and S424. Residues 430–507 form the RRM 2 domain; the sequence is FCVYLKGLPF…RFIQVHPITK (78 aa). S525 carries the post-translational modification Phosphoserine. A compositionally biased stretch (low complexity) spans 717–734; the sequence is NGPPFNFPGNFGGSNAFG. Positions 717 to 853 are disordered; sequence NGPPFNFPGN…PGFASSSGKP (137 aa). Over residues 783 to 811 the composition is skewed to gly residues; the sequence is SGFGGGPQNFGNGPGSLGGPPGFGSGPPG. The span at 824 to 836 shows a compositional bias: pro residues; sequence AFGPGPGPGPGPG. Positions 856-932 constitute an RRM 3 domain; it reads TVIKVQNMPF…GSRKVKLVLG (77 aa).

It is found in the nucleus. This chain is RNA-binding protein 12 (RBM12), found in Homo sapiens (Human).